The following is a 2285-amino-acid chain: MAAQVAPAAASSLGNPPPPPPSELKKAEQQQREEAGGEAAAAAAAERGEMKAAAGQESEGPAVGPPQPLGKELQDGAESNGGGGGGGAGSGGGPGAEPDLKNSNGNAGPRPALNNNLTEPPGGGGGGSSDGVGAPPHSAAAALPPPAYGFGQPYGRSPSAVAAAAAAVFHQQHGGQQSPGLAALQSGGGGGLEPYAGPQQNSHDHGFPNHQYNSYYPNRSAYPPPAPAYALSSPRGGTPGSGAAAAAGSKPPPSSSASASSSSSSFAQQRFGAMGGGGPSAAGGGTPQPTATPTLNQLLTSPSSARGYQGYPGGDYSGGPQDGGAGKGPADMASQCWGAAAAAAAAAAASGGAQQRSHHAPMSPGSSGGGGQPLARTPQPSSPMDQMGKMRPQPYGGTNPYSQQQGPPSGPQQGHGYPGQPYGSQTPQRYPMTMQGRAQSAMGGLSYTQQIPPYGQQGPSGYGQQGQTPYYNQQSPHPQQQQPPYSQQPPSQTPHAQPSYQQQPQSQPPQLQSSQPPYSQQPSQPPHQQSPAPYPSQQSTTQQHPQSQPPYSQPQAQSPYQQQQPQQPAPSTLSQQAAYPQPQSQQSQQTAYSQQRFPPPQELSQDSFGSQASSAPSMTSSKGGQEDMNLSLQSRPSSLPDLSGSIDDLPMGTEGALSPGVSTSGISSSQGEQSNPAQSPFSPHTSPHLPGIRGPSPSPVGSPASVAQSRSGPLSPAAVPGNQMPPRPPSGQSDSIMHPSMNQSSIAQDRGYMQRNPQMPQYSSPQPGSALSPRQPSGGQIHTGMGSYQQNSMGSYGPQGGQYGPQGGYPRQPNYNALPNANYPSAGMAGGINPMGAGGQMHGQPGIPPYGTLPPGRMSHASMGNRPYGPNMANMPPQVGSGMCPPPGGMNRKTQETAVAMHVAANSIQNRPPGYPNMNQGGMMGTGPPYGQGINSMAGMINPQGPPYSMGGTMANNSAGMAASPEMMGLGDVKLTPATKMNNKADGTPKTESKSKKSSSSTTTNEKITKLYELGGEPERKMWVDRYLAFTEEKAMGMTNLPAVGRKPLDLYRLYVSVKEIGGLTQVNKNKKWRELATNLNVGTSSSAASSLKKQYIQCLYAFECKIERGEDPPPDIFAAADSKKSQPKIQPPSPAGSGSMQGPQTPQSTSSSMAEGGDLKPPTPASTPHSQIPPLPGMSRSNSVGIQDAFNDGSDSTFQKRNSMTPNPGYQPSMNTSDMMGRMSYEPNKDPYGSMRKAPGSDPFMSSGQGPNGGMGDPYSRAAGPGLGNVAMGPRQHYPYGGPYDRVRTEPGIGPEGNMSTGAPQPNLMPSNPDSGMYSPSRYPPQQQQQQQQRHDSYGNQFSTQGTPSGSPFPSQQTTMYQQQQQNYKRPMDGTYGPPAKRHEGEMYSVPYSTGQGQPQQQQLPPAQPQPASQQQAAQPSPQQDVYNQYGNAYPATATAATERRPAGGPQNQFPFQFGRDRVSAPPGTNAQQNMPPQMMGGPIQASAEVAQQGTMWQGRNDMTYNYANRQSTGSAPQGPAYHGVNRTDEMLHTDQRANHEGSWPSHGTRQPPYGPSAPVPPMTRPPPSNYQPPPSMQNHIPQVSSPAPLPRPMENRTSPSKSPFLHSGMKMQKAGPPVPASHIAPAPVQPPMIRRDITFPPGSVEATQPVLKQRRRLTMKDIGTPEAWRVMMSLKSGLLAESTWALDTINILLYDDNSIMTFNLSQLPGLLELLVEYFRRCLIEIFGILKEYEVGDPGQRTLLDPGRFSKVSSPAPMEGGEEEEELLGPKLEEEEEEEVVENDEEIAFSGKDKPASENSEEKLISKFDKLPVKIVQKNDPFVVDCSDKLGRVQEFDSGLLHWRIGGGDTTEHIQTHFESKTELLPSRPHAPCPPAPRKHVTTAEGTPGTTDQEGPPPDGPPEKRITATMDDMLSTRSSTLTEDGAKSSEAIKESSKFPFGISPAQSHRNIKILEDEPHSKDETPLCTLLDWQDSLAKRCVCVSNTIRSLSFVPGNDFEMSKHPGLLLILGKLILLHHKHPERKQAPLTYEKEEEQDQGVSCNKVEWWWDCLEMLRENTLVTLANISGQLDLSPYPESICLPVLDGLLHWAVCPSAEAQDPFSTLGPNAVLSPQRLVLETLSKLSIQDNNVDLILATPPFSRLEKLYSTMVRFLSDRKNPVCREMAVVLLANLAQGDSLAARAIAVQKGSIGNLLGFLEDSLAATQFQQSQASLLHMQNPPFEPTSVDMMRRAARALLALAKVDENHSEFTLYESRLLDISVSPLMNSLVSQVICDVLFLIGQS.

Low complexity predominate over residues M1–G14. Disordered regions lie at residues M1–N820 and A978–N1005. An N-acetylalanine modification is found at A2. Over residues E23–A35 the composition is skewed to basic and acidic residues. Phosphoserine is present on residues S58 and S79. 2 stretches are compositionally biased toward gly residues: residues S79–G95 and P121–D130. Low complexity-rich tracts occupy residues G131–A142, Y212–A221, and A228–S265. S233 is modified (phosphoserine). Over residues A273–T286 the composition is skewed to gly residues. T286 is subject to Phosphothreonine. An LXXLL motif is present at residues L295–L299. Polar residues predominate over residues L295–R306. Residue S301 is modified to Phosphoserine. Positions G310 to K327 are enriched in gly residues. Over residues G338 to A353 the composition is skewed to low complexity. 2 positions are modified to phosphoserine: S363 and S382. Residues P400–Q425 show a composition bias toward low complexity. R429 bears the Asymmetric dimethylarginine mark. Low complexity-rich tracts occupy residues Y447–Q457, Q465–Q546, and Q553–Q595. At S604 the chain carries Phosphoserine. The span at S610–S621 shows a compositional bias: low complexity. Polar residues predominate over residues M628–S637. A compositionally biased stretch (low complexity) spans S658–S674. Polar residues predominate over residues N675–T685. S696, S698, S702, S730, S764, and S772 each carry phosphoserine. 2 stretches are compositionally biased toward polar residues: residues S730–A747 and R755–M793. Gly residues predominate over residues G797–G807. The segment covering G808–N820 has biased composition (low complexity). One can recognise an ARID domain in the interval E1017 to E1108. Disordered stretches follow at residues P1113–G1483 and A1539–K1603. Residues M1141–M1154 show a composition bias toward low complexity. A compositionally biased stretch (pro residues) spans P1162–P1177. A Phosphoserine modification is found at S1184. A compositionally biased stretch (polar residues) spans G1194–D1219. A Phosphoserine modification is found at S1235. At R1276 the chain carries Omega-N-methylarginine. 2 stretches are compositionally biased toward polar residues: residues N1299–D1315 and Y1339–S1356. Residues Q1357–Q1367 show a composition bias toward low complexity. Residues N1368–E1387 carry the Nuclear localization signal motif. The segment covering G1396 to Q1425 has biased composition (low complexity). The segment covering P1468 to P1477 has biased composition (polar residues). Residues P1554–S1577 are compositionally biased toward pro residues. S1604 carries the post-translational modification Phosphoserine. N6-acetyllysine is present on K1612. The short motif at L1709 to L1713 is the LXXLL element. Disordered regions lie at residues P1747–E1774 and F1859–I1907. Residues S1751 and S1754 each carry the phosphoserine modification. Acidic residues predominate over residues G1761 to E1774. Low complexity predominate over residues E1886 to E1895. Residue T1888 is modified to Phosphothreonine. An N6-acetyllysine modification is found at K1905. A phosphoserine mark is found at S1929 and S1944. Short sequence motifs (LXXLL) lie at residues L1967–L1971 and L2085–L2089.

As to quaternary structure, component of SWI/SNF chromatin remodeling complexes, in some of which it can be mutually exclusive with ARID1B/BAF250B. The canonical complex contains a catalytic subunit (either SMARCA4/BRG1/BAF190A or SMARCA2/BRM/BAF190B) and at least SMARCE1, ACTL6A/BAF53, SMARCC1/BAF155, SMARCC2/BAF170, and SMARCB1/SNF5/BAF47. Other subunits specific to each of the complexes may also be present permitting several possible combinations developmentally and tissue specific. Component of the BAF (SWI/SNF-A) complex, which includes at least actin (ACTB), ARID1A/BAF250A, ARID1B/BAF250B, SMARCA2/BRM, SMARCA4/BRG1/BAF190A, ACTL6A/BAF53, ACTL6B/BAF53B, SMARCE1/BAF57, SMARCC1/BAF155, SMARCC2/BAF170, SMARCB1/SNF5/INI1, and one or more SMARCD1/BAF60A, SMARCD2/BAF60B, or SMARCD3/BAF60C. In muscle cells, the BAF complex also contains DPF3. Component of neural progenitors-specific chromatin remodeling complex (npBAF complex) composed of at least, ARID1A/BAF250A or ARID1B/BAF250B, SMARCD1/BAF60A, SMARCD3/BAF60C, SMARCA2/BRM/BAF190B, SMARCA4/BRG1/BAF190A, SMARCB1/BAF47, SMARCC1/BAF155, SMARCE1/BAF57, SMARCC2/BAF170, PHF10/BAF45A, ACTL6A/BAF53A and actin. Component of neuron-specific chromatin remodeling complex (nBAF complex) composed of at least, ARID1A/BAF250A or ARID1B/BAF250B, SMARCD1/BAF60A, SMARCD3/BAF60C, SMARCA2/BRM/BAF190B, SMARCA4/BRG1/BAF190A, SMARCB1/BAF47, SMARCC1/BAF155, SMARCE1/BAF57, SMARCC2/BAF170, DPF1/BAF45B, DPF3/BAF45C, ACTL6B/BAF53B and actin. Component of a SWI/SNF-like EBAFa complex, at least composed of SMARCA4/BRG1/BAF190A, SMARCB1/BAF47/SNF5, ACTL6A/BAF53A, SMARCE1/BAF57, SMARCD1/BAF60A, SMARCC1/BAF155, SMARCC2/BAF170, BAF250A and MLLT1/ENL. Interacts through its C-terminus with SMARCA2/BRM/BAF190B and SMARCA4/BRG1/BAF190A. Interacts with SMARCC1/BAF155. Interacts with FOS, FOSB isoform 1 and 2, FOSL1 and FOSL2. Highly expressed in spleen, thymus, prostate, testis, ovary, small intestine, colon, and PBL, and at a much lower level in heart, brain, placenta, lung, liver, skeletal muscle, kidney, and pancreas.

The protein localises to the nucleus. Its function is as follows. Involved in transcriptional activation and repression of select genes by chromatin remodeling (alteration of DNA-nucleosome topology). Component of SWI/SNF chromatin remodeling complexes that carry out key enzymatic activities, changing chromatin structure by altering DNA-histone contacts within a nucleosome in an ATP-dependent manner. Binds DNA non-specifically. Belongs to the neural progenitors-specific chromatin remodeling complex (npBAF complex) and the neuron-specific chromatin remodeling complex (nBAF complex). During neural development a switch from a stem/progenitor to a postmitotic chromatin remodeling mechanism occurs as neurons exit the cell cycle and become committed to their adult state. The transition from proliferating neural stem/progenitor cells to postmitotic neurons requires a switch in subunit composition of the npBAF and nBAF complexes. As neural progenitors exit mitosis and differentiate into neurons, npBAF complexes which contain ACTL6A/BAF53A and PHF10/BAF45A, are exchanged for homologous alternative ACTL6B/BAF53B and DPF1/BAF45B or DPF3/BAF45C subunits in neuron-specific complexes (nBAF). The npBAF complex is essential for the self-renewal/proliferative capacity of the multipotent neural stem cells. The nBAF complex along with CREST plays a role regulating the activity of genes essential for dendrite growth. The protein is AT-rich interactive domain-containing protein 1A (ARID1A) of Homo sapiens (Human).